The primary structure comprises 419 residues: UDP-N-acetylglucosamine 1-carboxyvinyltransferase (419 aa).

22-23 (KN) serves as a coordination point for phosphoenolpyruvate. R95 lines the UDP-N-acetyl-alpha-D-glucosamine pocket. The Proton donor role is filled by C119. A 2-(S-cysteinyl)pyruvic acid O-phosphothioketal modification is found at C119. Residues 164 to 167 (KVSV), D308, and I330 each bind UDP-N-acetyl-alpha-D-glucosamine.

Belongs to the EPSP synthase family. MurA subfamily.

Its subcellular location is the cytoplasm. The catalysed reaction is phosphoenolpyruvate + UDP-N-acetyl-alpha-D-glucosamine = UDP-N-acetyl-3-O-(1-carboxyvinyl)-alpha-D-glucosamine + phosphate. It participates in cell wall biogenesis; peptidoglycan biosynthesis. Cell wall formation. Adds enolpyruvyl to UDP-N-acetylglucosamine. In Rickettsia rickettsii (strain Iowa), this protein is UDP-N-acetylglucosamine 1-carboxyvinyltransferase.